A 299-amino-acid polypeptide reads, in one-letter code: Acetylglutamate kinase (299 aa).

Substrate-binding positions include 66–67 (GG), R88, and N196.

The protein belongs to the acetylglutamate kinase family. ArgB subfamily.

The protein resides in the cytoplasm. The catalysed reaction is N-acetyl-L-glutamate + ATP = N-acetyl-L-glutamyl 5-phosphate + ADP. It participates in amino-acid biosynthesis; L-arginine biosynthesis; N(2)-acetyl-L-ornithine from L-glutamate: step 2/4. In terms of biological role, catalyzes the ATP-dependent phosphorylation of N-acetyl-L-glutamate. This Alcanivorax borkumensis (strain ATCC 700651 / DSM 11573 / NCIMB 13689 / SK2) protein is Acetylglutamate kinase.